A 443-amino-acid polypeptide reads, in one-letter code: tRNA-2-methylthio-N(6)-dimethylallyladenosine synthase (443 aa).

Residues 12 to 126 (KTFRVKSFGC…LPEMVADAAA (115 aa)) form the MTTase N-terminal domain. The [4Fe-4S] cluster site is built by cysteine 21, cysteine 57, cysteine 89, cysteine 162, cysteine 166, and cysteine 169. The region spanning 148-380 (RKSAPTAFLT…QAALNRDQLA (233 aa)) is the Radical SAM core domain. Residues 383-443 (KASVGKTCEV…GPNSISGRLA (61 aa)) enclose the TRAM domain.

It belongs to the methylthiotransferase family. MiaB subfamily. In terms of assembly, monomer. [4Fe-4S] cluster is required as a cofactor.

Its subcellular location is the cytoplasm. It catalyses the reaction N(6)-dimethylallyladenosine(37) in tRNA + (sulfur carrier)-SH + AH2 + 2 S-adenosyl-L-methionine = 2-methylsulfanyl-N(6)-dimethylallyladenosine(37) in tRNA + (sulfur carrier)-H + 5'-deoxyadenosine + L-methionine + A + S-adenosyl-L-homocysteine + 2 H(+). Its function is as follows. Catalyzes the methylthiolation of N6-(dimethylallyl)adenosine (i(6)A), leading to the formation of 2-methylthio-N6-(dimethylallyl)adenosine (ms(2)i(6)A) at position 37 in tRNAs that read codons beginning with uridine. The polypeptide is tRNA-2-methylthio-N(6)-dimethylallyladenosine synthase (Novosphingobium aromaticivorans (strain ATCC 700278 / DSM 12444 / CCUG 56034 / CIP 105152 / NBRC 16084 / F199)).